A 130-amino-acid polypeptide reads, in one-letter code: Vascular-related unknown protein 3 (130 aa).

The segment at 45 to 81 is disordered; the sequence is DDSSMMSDAASPMGCVEEDTASSPSNRTEGYSGMEDN.

Its function is as follows. Involved in the regulation of plant growth. The sequence is that of Vascular-related unknown protein 3 from Arabidopsis thaliana (Mouse-ear cress).